The following is a 349-amino-acid chain: tRNA pseudouridine synthase D (349 aa).

Residue Phe-27 participates in substrate binding. Asp-80 (nucleophile) is an active-site residue. Asn-129 contributes to the substrate binding site. A TRUD domain is found at 155–303 (GVPNYFGAQR…VEASRRAMLL (149 aa)). Phe-329 serves as a coordination point for substrate.

It belongs to the pseudouridine synthase TruD family.

The catalysed reaction is uridine(13) in tRNA = pseudouridine(13) in tRNA. In terms of biological role, responsible for synthesis of pseudouridine from uracil-13 in transfer RNAs. In Salmonella typhi, this protein is tRNA pseudouridine synthase D.